The sequence spans 151 residues: Sec-independent protein translocase protein TatB (151 aa).

The helical transmembrane segment at 1–21 threads the bilayer; the sequence is MFGMSLPEIIIIAVIAVIFLG. The segment covering 120 to 131 has biased composition (low complexity); it reads NNDPLNNETLNE. The interval 120–151 is disordered; that stretch reads NNDPLNNETLNEQPSKPSPNLNLENKEIKKEA. A compositionally biased stretch (polar residues) spans 132 to 142; the sequence is QPSKPSPNLNL.

This sequence belongs to the TatB family. In terms of assembly, the Tat system comprises two distinct complexes: a TatABC complex, containing multiple copies of TatA, TatB and TatC subunits, and a separate TatA complex, containing only TatA subunits. Substrates initially bind to the TatABC complex, which probably triggers association of the separate TatA complex to form the active translocon.

It is found in the cell inner membrane. Part of the twin-arginine translocation (Tat) system that transports large folded proteins containing a characteristic twin-arginine motif in their signal peptide across membranes. Together with TatC, TatB is part of a receptor directly interacting with Tat signal peptides. TatB may form an oligomeric binding site that transiently accommodates folded Tat precursor proteins before their translocation. The chain is Sec-independent protein translocase protein TatB from Campylobacter fetus subsp. fetus (strain 82-40).